The sequence spans 289 residues: Oxaloacetate decarboxylase (289 aa).

Serine 50 is a binding site for substrate. Aspartate 88 contributes to the Mg(2+) binding site. Arginine 159 and histidine 235 together coordinate substrate.

It belongs to the isocitrate lyase/PEP mutase superfamily. Oxaloacetate decarboxylase family. Homotetramer; dimer of dimers. Requires Mg(2+) as cofactor.

It carries out the reaction oxaloacetate + H(+) = pyruvate + CO2. Catalyzes the decarboxylation of oxaloacetate into pyruvate. Seems to play a role in maintaining cellular concentrations of bicarbonate and pyruvate. The protein is Oxaloacetate decarboxylase of Pseudomonas putida (strain GB-1).